Here is a 200-residue protein sequence, read N- to C-terminus: Putative vacuolar protein sorting-associated protein 24 homolog 2 (200 aa).

Residues 2–23 (TIKSLLSDIEREERNVHKAIKD) are a coiled coil.

It belongs to the SNF7 family. As to quaternary structure, component of the endosomal sorting required for transport complex III (ESCRT-III), composed at least of VPS2, VPS20, VPS24 and VPS32.

It localises to the endosome. Component of the ESCRT-III complex, which is required for multivesicular bodies (MVBs) formation and sorting of endosomal cargo proteins into MVBs. The ESCRT-III complex is probably involved in the concentration of MVB cargo. This Arabidopsis thaliana (Mouse-ear cress) protein is Putative vacuolar protein sorting-associated protein 24 homolog 2 (VPS24-2).